The chain runs to 83 residues: Small ribosomal subunit protein bS18 (83 aa).

This sequence belongs to the bacterial ribosomal protein bS18 family. Part of the 30S ribosomal subunit. Forms a tight heterodimer with protein bS6.

Functionally, binds as a heterodimer with protein bS6 to the central domain of the 16S rRNA, where it helps stabilize the platform of the 30S subunit. This is Small ribosomal subunit protein bS18 from Cytophaga hutchinsonii (strain ATCC 33406 / DSM 1761 / CIP 103989 / NBRC 15051 / NCIMB 9469 / D465).